The chain runs to 461 residues: Cytochrome c biogenesis protein CcsB (461 aa).

Helical transmembrane passes span 32-52 (LRLAIALLLIIALFSISGTVI), 91-111 (TWWFLSLLVLFGTSLTACTFT), and 178-198 (IGPIIVHIGIVTILLGSIWGA).

This sequence belongs to the Ccs1/CcsB family. In terms of assembly, may interact with CcsA.

The protein localises to the cellular thylakoid membrane. Functionally, required during biogenesis of c-type cytochromes (cytochrome c6 and cytochrome f) at the step of heme attachment. This is Cytochrome c biogenesis protein CcsB from Nostoc sp. (strain PCC 7120 / SAG 25.82 / UTEX 2576).